Consider the following 116-residue polypeptide: UPF0342 protein BH1149 (116 aa).

This sequence belongs to the UPF0342 family.

The sequence is that of UPF0342 protein BH1149 from Halalkalibacterium halodurans (strain ATCC BAA-125 / DSM 18197 / FERM 7344 / JCM 9153 / C-125) (Bacillus halodurans).